We begin with the raw amino-acid sequence, 192 residues long: Large ribosomal subunit protein uL6 (192 aa).

The protein belongs to the universal ribosomal protein uL6 family. Component of the large ribosomal subunit.

The protein resides in the cytoplasm. Its function is as follows. Component of the large ribosomal subunit. The ribosome is a large ribonucleoprotein complex responsible for the synthesis of proteins in the cell. This chain is Large ribosomal subunit protein uL6 (rpl9), found in Ictalurus punctatus (Channel catfish).